The chain runs to 308 residues: Homeobox protein HMX3 (308 aa).

Disordered regions lie at residues 1-57 and 107-184; these read MPET…GFAL and AEKS…KKKT. Positions 9–19 are enriched in pro residues; it reads PSAPPPPPPPK. Basic and acidic residues-rich tracts occupy residues 135-144 and 156-177; these read AEQKERDPKS and EEGK…PEKK. The segment at residues 181 to 240 is a DNA-binding region (homeobox); the sequence is KKKTRTVFSRSQVFQLESTFDMKRYLSSSERAGLAASLHLTETQVKIWFQNRRNKWKRQL.

The protein belongs to the HMX homeobox family.

Its subcellular location is the nucleus. Functionally, transcription factor involved in specification of neuronal cell types and which is required for inner ear and hypothalamus development. Binds to the 5'-CAAGTG-3' core sequence. The protein is Homeobox protein HMX3 (HMX3) of Gallus gallus (Chicken).